An 892-amino-acid polypeptide reads, in one-letter code: Translation initiation factor IF-2 (892 aa).

The interval 88-306 (KKRTFVKRDP…LQQGFQKPAQ (219 aa)) is disordered. Basic and acidic residues-rich tracts occupy residues 93-159 (VKRD…KDKV) and 166-216 (DMIK…EENK). Residues 254–269 (GRGRNAKAARPAKKGK) show a composition bias toward basic residues. A compositionally biased stretch (basic and acidic residues) spans 270–282 (HAESKADREEARA). The tr-type G domain maps to 391–560 (PRAPVVTIMG…LLQAEVLELK (170 aa)). A G1 region spans residues 400-407 (GHVDHGKT). 400–407 (GHVDHGKT) contributes to the GTP binding site. Residues 425–429 (GITQH) form a G2 region. A G3 region spans residues 446–449 (DTPG). Residues 446–450 (DTPGH) and 500–503 (NKID) contribute to the GTP site. The interval 500 to 503 (NKID) is G4. Residues 536-538 (SAK) form a G5 region.

Belongs to the TRAFAC class translation factor GTPase superfamily. Classic translation factor GTPase family. IF-2 subfamily.

The protein resides in the cytoplasm. One of the essential components for the initiation of protein synthesis. Protects formylmethionyl-tRNA from spontaneous hydrolysis and promotes its binding to the 30S ribosomal subunits. Also involved in the hydrolysis of GTP during the formation of the 70S ribosomal complex. The chain is Translation initiation factor IF-2 from Salmonella schwarzengrund (strain CVM19633).